The chain runs to 207 residues: Testis-expressed protein 35 (207 aa).

Residues 43–79 (RKGMTRELKNELREVREQLTEKMEEIKQIKDIMDKDF) are a coiled coil.

Testis-specific. Expressed during spermatogenesis.

It localises to the nucleus. The polypeptide is Testis-expressed protein 35 (Tex35) (Mus musculus (Mouse)).